A 420-amino-acid polypeptide reads, in one-letter code: MVDEQVAVEHGTVSHTISREEDGVVHERRVLASGERVEVFYKAPAPRPREGRASTFHDFTVPAAAAVPGPEPEPEPHPAMPIHANGGGETKTNTQDQNQNQTTRARTNAKAEERTAEMDDTMASSGGQRGAPISADLLSLSSLTGRMAAMAPSWMKSEVCGERMRFKEDVYDGEAETLAEPPRCFMLSFVFIYYCCYLAFLALLAFGFNPLFLPSFMPVGAKVLRGKGRDFGVPLSYGCPTNPFCKVYTLIPAVVINNVTYYPNNTDSLGGHGGFEAAALHVAALFESGCPNLQAVTNRNRTFNVTRASGRVERRLVQDMQRVLASAVVVMHHHCHYETYYVFDGVGPEFGTIPTPSFKDVLAFRPSLVTNCTAPLKTSVKGPNWSGAAGGMKRKQCRVDRLTDRSFPAYLEEVMYVMVQ.

Disordered stretches follow at residues 1-21 (MVDEQVAVEHGTVSHTISREE) and 64-129 (AAAV…GGQR). Over 1–184 (MVDEQVAVEH…AETLAEPPRC (184 aa)) the chain is Intravirion. The span at 92–108 (TNTQDQNQNQTTRARTN) shows a compositional bias: low complexity. A helical; Signal-anchor for type II membrane protein membrane pass occupies residues 185-205 (FMLSFVFIYYCCYLAFLALLA). Over 206-420 (FGFNPLFLPS…LEEVMYVMVQ (215 aa)) the chain is Virion surface. 6 N-linked (GlcNAc...) asparagine; by host glycosylation sites follow: N258, N264, N300, N304, N371, and N384.

Belongs to the herpesviridae BDLF2 family. Interacts with BMRF2.

Its subcellular location is the virion membrane. Rearranges cellular actin to increase intercellular contacts and thereby promote virus cell-to-cell spreading. Induce the outgrowth of long, branched plasma membrane fronds to create intercellular network for virion traffic. The fronds are actin based and RhoA-dependent. This Epstein-Barr virus (strain GD1) (HHV-4) protein is Protein BDLF2.